The chain runs to 1039 residues: FERM domain-containing protein 4A (1039 aa).

An FERM domain is found at 20–322 (RRCQVHLLDD…SQHQFYLDRK (303 aa)). The tract at residues 358–420 (KGKIISGSSG…KLCLREAELT (63 aa)) is necessary for interaction with CYTH1. Residues 366-382 (SGSLLSSGSQESDSSQS) are compositionally biased toward low complexity. The tract at residues 366–386 (SGSLLSSGSQESDSSQSAKKD) is disordered. Residues 382 to 416 (SAKKDMLAALKSRQEALEETLRQRLEELKKLCLRE) adopt a coiled-coil conformation. The residue at position 530 (Ser530) is a Phosphoserine. A disordered region spans residues 553–680 (DEDSQVTSTI…MPSTPDLRVR (128 aa)). The segment covering 571–586 (GLPPRPPSHNRPPPPQ) has biased composition (pro residues). Positions 579-939 (HNRPPPPQSL…QWYQRSTASH (361 aa)) are necessary for tight junction and adherens junction localization; Requires for interaction with PARD3. 2 positions are modified to phosphoserine: Ser604 and Ser615. The segment covering 623–638 (VKKRSSHSHSSSHKRF) has biased composition (basic residues). 2 positions are modified to phosphoserine: Ser681 and Ser711. 2 disordered regions span residues 713–756 (ESQG…HSSS) and 772–813 (AEDS…AGGA). Residues 788–800 (RAAGALGSASSGS) are compositionally biased toward low complexity. A phosphoserine mark is found at Ser800, Ser872, and Ser901. Disordered stretches follow at residues 879-968 (FKES…STFV) and 980-1039 (CKAT…STDE). The segment covering 896 to 905 (LTPSRSQILR) has biased composition (polar residues). Residues 912–929 (EGAHDKGAGRAAVSDELR) are compositionally biased toward basic and acidic residues. A compositionally biased stretch (low complexity) spans 946 to 966 (SHTSSTSSDSGSQYSTSSQST). 2 stretches are compositionally biased toward polar residues: residues 986–1000 (ALPQ…SSEI) and 1013–1023 (TWQTGEATENS).

Interacts (via coiled-coil domain) with CYTH1 (via coiled-coil domain). Interacts with PARD3 (via coiled-coil domain). Found in a complex with PARD3, CYTH1 and FRMD4A. Interacts with CYTH2. Interacts with CYTH3.

Its subcellular location is the cytoplasm. It localises to the cytoskeleton. The protein resides in the cell junction. It is found in the adherens junction. The protein localises to the tight junction. In terms of biological role, scaffolding protein that regulates epithelial cell polarity by connecting ARF6 activation with the PAR3 complex. Plays a redundant role with FRMD4B in epithelial polarization. May regulate MAPT secretion by activating ARF6-signaling. This Homo sapiens (Human) protein is FERM domain-containing protein 4A.